The primary structure comprises 311 residues: Homeobox-leucine zipper protein HOX1 (311 aa).

Disordered regions lie at residues 29-69 (AGGA…SDHR) and 97-160 (AETT…KKLR). Residues 119-145 (SSPNSTLSSLSGKRGAPSAATAAAAAA) are compositionally biased toward low complexity. A DNA-binding region (homeobox) is located at residues 154–213 (GSRKKLRLSKDQAAVLEDTFKEHNTLNPKQKAALARQLNLKPRQVEVWFQNRRARTKLKQ). The tract at residues 212-256 (KQTEVDCELLKRCCETLTDENRRLHRELQELRALKLATAAAAPHH) is leucine-zipper. Positions 279–311 (SAATTTRNNSGAAPARPVPTRPWPPAAAQRSSA) are disordered. Residues 280 to 289 (AATTTRNNSG) are compositionally biased toward polar residues. A compositionally biased stretch (pro residues) spans 294–303 (RPVPTRPWPP).

Belongs to the HD-ZIP homeobox family. Class II subfamily. Homodimer. May form a heterodimer with HOX2, HOX3 or HOX7. Expressed in root provascular and vascular cylinder, provascular and vascular strands of leaves, provascular and vascular strands of the whole panicle, in mature embryo provascular bundles of scutellum and embryonic axis and provascular and vascular strands of young immature spikelet organs. Expressed in differentiating and differentiated xylem and phloem elements, and in outer and inner bundle sheath cells of all vascular bundles. Expressed in auricles, ligules, culm, guard cells brac hairs and pollen.

Its subcellular location is the nucleus. Its function is as follows. Probable transcription repressor involved leaf development. Binds to the DNA sequence 5'-CAAT[GC]ATTG-3'. May act as a regulatory switch to specify provascular cell fate. The polypeptide is Homeobox-leucine zipper protein HOX1 (HOX1) (Oryza sativa subsp. indica (Rice)).